The chain runs to 123 residues: Small ribosomal subunit protein uS12 (123 aa).

Position 89 is a 3-methylthioaspartic acid (Asp-89). The interval Gly-100–Lys-123 is disordered. Positions Gly-113 to Lys-123 are enriched in basic residues.

This sequence belongs to the universal ribosomal protein uS12 family. As to quaternary structure, part of the 30S ribosomal subunit. Contacts proteins S8 and S17. May interact with IF1 in the 30S initiation complex.

Functionally, with S4 and S5 plays an important role in translational accuracy. Interacts with and stabilizes bases of the 16S rRNA that are involved in tRNA selection in the A site and with the mRNA backbone. Located at the interface of the 30S and 50S subunits, it traverses the body of the 30S subunit contacting proteins on the other side and probably holding the rRNA structure together. The combined cluster of proteins S8, S12 and S17 appears to hold together the shoulder and platform of the 30S subunit. This chain is Small ribosomal subunit protein uS12, found in Pseudomonas aeruginosa (strain LESB58).